The chain runs to 186 residues: Apolipophorin-3 (186 aa).

Residues 1–18 (MAAKYVFVVAACSALAQA) form the signal peptide. Residues 19-23 (GIVRR) constitute a propeptide that is removed on maturation.

It belongs to the insect apolipophorin-3 family. As to quaternary structure, equilibrium between a soluble monomer and a bound lipoprotein form. Apolipophorin-3 associates with lipophorin during lipid loading until each particle contains 9 or 14 molecules of apolipophorin-3. Expressed in hemolymph. Also found in hemocytes and fat body.

It localises to the secreted. Its function is as follows. Assists in the loading of diacylglycerol, generated from triacylglycerol stores in the fat body through the action of adipokinetic hormone, into lipophorin, the hemolymph lipoprotein. It increases the lipid carrying capacity of lipophorin by covering the expanding hydrophobic surface resulting from diacylglycerol uptake. It thus plays a critical role in the transport of lipids during flight in several species of insects. Has antibacterial activity against the Gram-positive bacteria L.monocytogenes (MIC=6.5 uM). Lacks antibacterial activity against the Gram-positive bacteria B.circulans, M.luteus, S.aureus, and S.lutea, and the Gram-negative bacteria E.coli D31, E.coli ATCC 25922, and S.typhimurium. Lacks antifungal activity against S.cerevisiae, P.pastoris, Z.marxianus, C.albicans, C.wickerhamii, A.niger, F.oxysporum, and T.harizianum. The protein is Apolipophorin-3 of Galleria mellonella (Greater wax moth).